Here is a 315-residue protein sequence, read N- to C-terminus: Small ribosomal subunit protein uS3 (315 aa).

Residues 38–106 (IRKMMSRGME…QVQLNILEVK (69 aa)) form the KH type-2 domain. The segment at 211 to 315 (AEREAQEALQ…VANTPEKAEE (105 aa)) is disordered. A compositionally biased stretch (basic residues) spans 222–232 (QTRRERPRRGP). Low complexity predominate over residues 265–315 (APAETPAGEAAATEPTAPVAEPATAAASAPAEAASAPAEAAVANTPEKAEE).

This sequence belongs to the universal ribosomal protein uS3 family. Part of the 30S ribosomal subunit. Forms a tight complex with proteins S10 and S14.

Functionally, binds the lower part of the 30S subunit head. Binds mRNA in the 70S ribosome, positioning it for translation. The polypeptide is Small ribosomal subunit protein uS3 (Frankia casuarinae (strain DSM 45818 / CECT 9043 / HFP020203 / CcI3)).